The sequence spans 462 residues: 3beta-hydroxysteroid dehydrogenase/Delta(5)-Delta(4) isomerase 1 (462 aa).

NAD(+) contacts are provided by residues 51–56 (GGAGHL), Tyr220, and Lys224. Lys224 functions as the Proton donor in the catalytic mechanism. Transmembrane regions (helical) follow at residues 321 to 341 (VGTFSFWTPLNIALGFSSSMI) and 428 to 448 (VAVLVLGTILIFVAVFSFTFW).

The protein belongs to the 3-beta-HSD family. In terms of tissue distribution, expressed exclusively in the neuron-like XXX(L/R) cells through all four larval stages and becomes fainter in adults.

Its subcellular location is the membrane. It carries out the reaction a 3beta-hydroxy-Delta(5)-steroid + NAD(+) = a 3-oxo-Delta(5)-steroid + NADH + H(+). The enzyme catalyses cholesterol + NAD(+) = cholest-5-en-3-one + NADH + H(+). It catalyses the reaction a 3-oxo-Delta(5)-steroid = a 3-oxo-Delta(4)-steroid. The catalysed reaction is cholest-5-en-3-one = cholest-4-en-3-one. Its pathway is steroid hormone biosynthesis; dafachronic acid biosynthesis. Functionally, hydroxysteroid dehydrogenase involved in the biosynthesis of dafrachonic acids. Catalyzes the dehydrogenation of cholesterol or its derivatives and the isomerization of the double carbon bond on the sterol ring. Modifies sterols into a Delta(4)-3-keto-sterols such as cholest-4-en-3-one, precursor of Delta(4)-dafachronic acid. Contributes to the production of Delta(7)-dafachronic acid in the XXX cells. Dafachronic acids act as ligands and bind directly to the nuclear hormone receptor (NHR) daf-12 suppressing dauer formation and inducing reproductive growth. Acts in parallel to AKT-1 to promote reproductive development via DAF-16/FoxO and DAF-12. The chain is 3beta-hydroxysteroid dehydrogenase/Delta(5)-Delta(4) isomerase 1 from Caenorhabditis elegans.